The sequence spans 204 residues: Large ribosomal subunit protein eL15 (204 aa).

Positions 172–182 are enriched in basic residues; it reads RGLRGRGHLHN. Residues 172–204 are disordered; that stretch reads RGLRGRGHLHNKAPPSRRANWKRNQTLSLPRYR. Positions 193-204 are enriched in polar residues; the sequence is KRNQTLSLPRYR.

The protein belongs to the eukaryotic ribosomal protein eL15 family.

This chain is Large ribosomal subunit protein eL15 (RPL15), found in Petunia hybrida (Petunia).